The primary structure comprises 307 residues: D-alanine--D-alanine ligase (307 aa).

Positions 108–301 constitute an ATP-grasp domain; that stretch reads KEVFAAAGLP…FPEFCAWMVE (194 aa). 135–185 contributes to the ATP binding site; that stretch reads LPPPYVVKPNCEGSSVGVYIVQADANGPPRLAPDMPRDLMVETYIPGRELT. Asp-252, Glu-268, and Asn-270 together coordinate Mg(2+).

This sequence belongs to the D-alanine--D-alanine ligase family. Mg(2+) is required as a cofactor. Mn(2+) serves as cofactor.

It localises to the cytoplasm. It carries out the reaction 2 D-alanine + ATP = D-alanyl-D-alanine + ADP + phosphate + H(+). It participates in cell wall biogenesis; peptidoglycan biosynthesis. Cell wall formation. The sequence is that of D-alanine--D-alanine ligase from Cereibacter sphaeroides (strain ATCC 17025 / ATH 2.4.3) (Rhodobacter sphaeroides).